A 64-amino-acid polypeptide reads, in one-letter code: Lectin-A (64 aa).

Chitin-binding type-1 domains follow at residues 1-20 and 22-45; these read APEC…QVVT and DFDD…NTDA.

Glycosylated.

Functionally, N-acetyl-D-glucosamine binding lectin. Shows low hemagglutinating activity towards human erythrocytes. Has low mitogenic activity towards human peripheral blood lymphocytes. The sequence is that of Lectin-A from Phytolacca americana (American pokeweed).